Reading from the N-terminus, the 445-residue chain is von Willebrand factor A domain-containing protein 1 (445 aa).

An N-terminal signal peptide occupies residues 1–22 (MLPWTALGLALSLRLALARSGA). Residues 34–213 (DLMFLLDSSA…ELRGSILDAM (180 aa)) form the VWFA domain. Phosphoserine; by FAM20C occurs at positions 74 and 80. Tyrosine 83 carries the post-translational modification Phosphotyrosine. Serine 93 carries the phosphoserine; by FAM20C modification. One can recognise a Fibronectin type-III 1 domain in the interval 214 to 304 (RPQQLHATEI…QILRVRTRPG (91 aa)). A glycan (N-linked (GlcNAc...) asparagine) is linked at asparagine 264. Disordered stretches follow at residues 302–325 (RPGE…TQLA) and 411–445 (RESA…SREP). Positions 311-325 (SGPESGAGPAPTQLA) are enriched in low complexity. The region spanning 334 to 427 (GPERIVISHA…KACTPDGPRP (94 aa)) is the Fibronectin type-III 2 domain.

As to quaternary structure, homodimer or homomultimer; disulfide-linked. Interacts with HSPG2. In terms of processing, N-glycosylated.

It is found in the secreted. It localises to the extracellular space. Its subcellular location is the extracellular matrix. The protein localises to the basement membrane. In terms of biological role, promotes matrix assembly. Involved in the organization of skeletal muscles and in the formation of neuromuscular junctions. This is von Willebrand factor A domain-containing protein 1 from Homo sapiens (Human).